The following is a 173-amino-acid chain: MKFYYHDNDSSVDQCAPHDSGEPVTAEQLEKIGVLAFHYPDVEDVNRLAKERKYTNRDEVTITPEAMGGQENYEKKLKVFYEEHLHEDEEIRYILDGEGYFDVRDKDDRWIRAQLNAGDLLILPSGIYHRFTLSEKNYVHTMRLFQAEPKWVALPRPVDNNPYRQEYVKAISA.

Positions 1–21 (MKFYYHDNDSSVDQCAPHDSG) are disordered. Fe(2+)-binding residues include histidine 84, histidine 86, glutamate 90, and histidine 129. Residues histidine 84, histidine 86, glutamate 90, and histidine 129 each contribute to the Ni(2+) site.

Belongs to the acireductone dioxygenase (ARD) family. It depends on Fe(2+) as a cofactor. Ni(2+) is required as a cofactor.

It is found in the cytoplasm. The protein resides in the nucleus. It catalyses the reaction 1,2-dihydroxy-5-(methylsulfanyl)pent-1-en-3-one + O2 = 4-methylsulfanyl-2-oxobutanoate + formate + 2 H(+). The catalysed reaction is 1,2-dihydroxy-5-(methylsulfanyl)pent-1-en-3-one + O2 = 3-(methylsulfanyl)propanoate + CO + formate + 2 H(+). Its pathway is amino-acid biosynthesis; L-methionine biosynthesis via salvage pathway; L-methionine from S-methyl-5-thio-alpha-D-ribose 1-phosphate: step 5/6. In terms of biological role, catalyzes 2 different reactions between oxygen and the acireductone 1,2-dihydroxy-3-keto-5-methylthiopentene (DHK-MTPene) depending upon the metal bound in the active site. Fe-containing acireductone dioxygenase (Fe-ARD) produces formate and 2-keto-4-methylthiobutyrate (KMTB), the alpha-ketoacid precursor of methionine in the methionine recycle pathway. Ni-containing acireductone dioxygenase (Ni-ARD) produces methylthiopropionate, carbon monoxide and formate, and does not lie on the methionine recycle pathway. In Yarrowia lipolytica (strain CLIB 122 / E 150) (Yeast), this protein is Acireductone dioxygenase.